We begin with the raw amino-acid sequence, 437 residues long: MSETHLSTKKFADFPLHKEVQQALNEVGFEFCTPIQALSLPILLAKKDIAGQAQTGTGKTLAFLVATFNHLLTEAAPTERKINQPRAIIMAPTRELAIQIAKDANLLAKHTGLKVGIVYGGEGYEAQRKVLDKGIDILIGTTGRIIDYVRQGVIDVSAIQAVVLDEADRMFDLGFIKDIRFLFRRMPDAKSRLNMLFSATLSMKVQELAYDHMNEPEKVEIAPNEKTSKNIKEEIFYPSMEEKMPLLLSLLEEDWPEKAIVFSNTKHSCEKVWSWLEGDGHRVGLLTGDVPQKKRLRILEQFTSGDIDVLVATDVAARGLHIADVSHVYNYDLPDDCEDYVHRIGRTGRAGQKGVSVSFACEEYALNLPAIESYIQHSIPVTSYDSEALLDDIPAPKRIHRKPSSHSRNSRDRSGSRPQGGHRGNAPRRHDKTRRHS.

The Q motif signature appears at 9–37; sequence KKFADFPLHKEVQQALNEVGFEFCTPIQA. The Helicase ATP-binding domain maps to 40 to 219; sequence LPILLAKKDI…YDHMNEPEKV (180 aa). An ATP-binding site is contributed by 53 to 60; the sequence is AQTGTGKT. The DEAD box motif lies at 165-168; that stretch reads DEAD. The Helicase C-terminal domain occupies 243–390; it reads KMPLLLSLLE…VTSYDSEALL (148 aa). Residues 394–437 form a disordered region; it reads PAPKRIHRKPSSHSRNSRDRSGSRPQGGHRGNAPRRHDKTRRHS. Residues 425–437 show a composition bias toward basic residues; the sequence is NAPRRHDKTRRHS.

This sequence belongs to the DEAD box helicase family. RhlB subfamily. Component of the RNA degradosome, which is a multiprotein complex involved in RNA processing and mRNA degradation.

Its subcellular location is the cytoplasm. The catalysed reaction is ATP + H2O = ADP + phosphate + H(+). In terms of biological role, DEAD-box RNA helicase involved in RNA degradation. Has RNA-dependent ATPase activity and unwinds double-stranded RNA. In Shewanella piezotolerans (strain WP3 / JCM 13877), this protein is ATP-dependent RNA helicase RhlB.